The chain runs to 658 residues: Endoplasmic reticulum mannosyl-oligosaccharide 1,2-alpha-mannosidase (658 aa).

Residues 1–50 (MYPPPAPPPAPHRDFISVTLSLGESYDNSKSRRRRSCWRKWKQLSRLQRN) are Cytoplasmic-facing. The helical; Signal-anchor for type II membrane protein transmembrane segment at 51 to 71 (VILFVLGFLILCGFLYSLHTA) threads the bilayer. The Lumenal portion of the chain corresponds to 72 to 658 (DQWKALSGRP…AHPLPIWAPA (587 aa)). Position 102 is a phosphoserine (Ser102). A disordered region spans residues 123–142 (GPPHLQIRPPNTVSKDGMQD). Residue Glu289 is the Proton donor of the active site. Asp422 is an active-site residue. Cys486 and Cys515 are joined by a disulfide. Glu529 (proton donor) is an active-site residue. Glu558 is a catalytic residue. Thr647 is a Ca(2+) binding site.

It belongs to the glycosyl hydrolase 47 family. The cofactor is Ca(2+).

It localises to the endoplasmic reticulum membrane. The enzyme catalyses N(4)-(alpha-D-Man-(1-&gt;2)-alpha-D-Man-(1-&gt;2)-alpha-D-Man-(1-&gt;3)-[alpha-D-Man-(1-&gt;2)-alpha-D-Man-(1-&gt;3)-[alpha-D-Man-(1-&gt;2)-alpha-D-Man-(1-&gt;6)]-alpha-D-Man-(1-&gt;6)]-beta-D-Man-(1-&gt;4)-beta-D-GlcNAc-(1-&gt;4)-beta-D-GlcNAc)-L-asparaginyl-[protein] (N-glucan mannose isomer 9A1,2,3B1,2,3) + 4 H2O = N(4)-(alpha-D-Man-(1-&gt;3)-[alpha-D-Man-(1-&gt;3)-[alpha-D-Man-(1-&gt;6)]-alpha-D-Man-(1-&gt;6)]-beta-D-Man-(1-&gt;4)-beta-D-GlcNAc-(1-&gt;4)-beta-D-GlcNAc)-L-asparaginyl-[protein] (N-glucan mannose isomer 5A1,2) + 4 beta-D-mannose. The catalysed reaction is N(4)-(alpha-D-Man-(1-&gt;2)-alpha-D-Man-(1-&gt;2)-alpha-D-Man-(1-&gt;3)-[alpha-D-Man-(1-&gt;3)-[alpha-D-Man-(1-&gt;2)-alpha-D-Man-(1-&gt;6)]-alpha-D-Man-(1-&gt;6)]-beta-D-Man-(1-&gt;4)-beta-D-GlcNAc-(1-&gt;4)-beta-D-GlcNAc)-L-asparaginyl-[protein] (N-glucan mannose isomer 8A1,2,3B1,3) + 3 H2O = N(4)-(alpha-D-Man-(1-&gt;3)-[alpha-D-Man-(1-&gt;3)-[alpha-D-Man-(1-&gt;6)]-alpha-D-Man-(1-&gt;6)]-beta-D-Man-(1-&gt;4)-beta-D-GlcNAc-(1-&gt;4)-beta-D-GlcNAc)-L-asparaginyl-[protein] (N-glucan mannose isomer 5A1,2) + 3 beta-D-mannose. It participates in protein modification; protein glycosylation. Its function is as follows. Involved in glycoprotein quality control targeting of misfolded glycoproteins for degradation. It primarily trims a single alpha-1,2-linked mannose residue from Man(9)GlcNAc(2) to produce Man(8)GlcNAc(2), but at high enzyme concentrations, as found in the ER quality control compartment (ERQC), it further trims the carbohydrates to Man(5-6)GlcNAc(2). This is Endoplasmic reticulum mannosyl-oligosaccharide 1,2-alpha-mannosidase (Man1b1) from Mus musculus (Mouse).